Here is a 610-residue protein sequence, read N- to C-terminus: ATP-dependent zinc metalloprotease FtsH (610 aa).

The Cytoplasmic portion of the chain corresponds to 1 to 5 (MNRSN). Residues 6–26 (IWNLLFTILIIVTLFWLARFF) form a helical membrane-spanning segment. At 27–107 (YVENSPVSKL…SGERSGSSSF (81 aa)) the chain is on the periplasmic side. Residues 108–128 (WINVLGTLIPTILFIVVWLFI) form a helical membrane-spanning segment. Over 129–610 (MRSLSGRNNQ…LSEEFEKVVE (482 aa)) the chain is Cytoplasmic. ATP-binding positions include Gly-164, 204-208 (GTGKT), Leu-209, His-343, and Glu-371. His-423 provides a ligand contact to Zn(2+). Glu-424 is an active-site residue. 2 residues coordinate Zn(2+): His-427 and Asp-500.

It in the central section; belongs to the AAA ATPase family. This sequence in the C-terminal section; belongs to the peptidase M41 family. As to quaternary structure, the isolated ADP-bound cytosolic domain forms a 6-fold symmetric protease disk and a 2-fold symmetric AAA ATPase ring. In the absence of nucleotide the AAA ATPase ring also forms symmetric hexamers. The cofactor is Zn(2+).

The protein localises to the cell inner membrane. Its function is as follows. Acts as a processive, ATP-dependent zinc metallopeptidase for both cytoplasmic and membrane proteins. Plays a role in the quality control of integral membrane proteins. In Thermotoga maritima (strain ATCC 43589 / DSM 3109 / JCM 10099 / NBRC 100826 / MSB8), this protein is ATP-dependent zinc metalloprotease FtsH.